Consider the following 236-residue polypeptide: Cyclin-P3-1 (236 aa).

Belongs to the cyclin family. Cyclin U/P subfamily.

In Oryza sativa subsp. japonica (Rice), this protein is Cyclin-P3-1 (CYCP3-1).